An 867-amino-acid polypeptide reads, in one-letter code: MATFISVPLKKTSEVDLVKPLSKYIHNTYPSGEDQTEYCRAVDELNKLRKSAVGRPLDKHETSLETVMRYYDQLCSVEPKFPFTESQLCLTFTWKDAFDKGSIFGGSVKLALPSLGYEKTCVLFNIGALASQIASEQNLDNDEALKAASKFYQLASGAFSHIKDTVLSSLNRDPTVDISPDTVGTLSLIMLAQAQEVFFLKATRDKMKDAVIAKLANQAADYYGDAFKQCQYKDTLSKEVFPILAAKHCIMQAHAEYHQSVLAKQQKKFGEEIGRLQHASDLVKTVSSRYDEYVNVKDLADKINRALTAAKKDNDFIYHDRVPDLKDLDPVGKASLVKSTPVNVPLSQKYTDLFEKMVPLAVQQCLSVYNQRKSELINSTIAQMRDATIFANGVLASLNLPAAVEDVSGDSIPQSILNKSKTVIEQGGIQTIGQLIRDLPELLQRNKEILEESLKFLDEEEATDNDLKAKFKDRWQRTPSTELYKPLRSEGSNFRNVLDKAIGADAVVKERYQSHREAIVILCKPEAELNAAIPSANPAKTMQGSEVVTVLKSLLNKLDDMKKEREQLENDIKSVNFDMTTKFLTALAQDGAVNEEAISVTELDQIYGSYTYKVQENLKKQEDLLNNIQSAHQEFSKMKQSNSEANLREEVLKNLAVGHDNYIELVANLKEGTKFYNDLTDILLKFQCKCSDIVFARKTERDELLKDIQQSIAREPSAPSIPQVPSYQSAPSSISTNIATSSIPTPAPRTVFSAKQPPPRPPPPAMPSASPVPASAAQASNPAPTAAADSSQPPSNTIPSQAQGPPYPSYPGYPGYYGMPMPVGYNPYMYGQQTIPPYMYQPPSGQPPYPAQQPSFSYPQQPFFPPQ.

Residues 3–391 enclose the BRO1 domain; sequence TFISVPLKKT…AQMRDATIFA (389 aa). Disordered regions lie at residues 714-809 and 835-867; these read REPS…PYPS and IPPYMYQPPSGQPPYPAQQPSFSYPQQPFFPPQ. Low complexity predominate over residues 729–744; the sequence is SAPSSISTNIATSSIP. A compositionally biased stretch (pro residues) spans 756–766; the sequence is QPPPRPPPPAM. Residues 767–791 show a composition bias toward low complexity; the sequence is PSASPVPASAAQASNPAPTAAADSS. Residues 792–803 show a composition bias toward polar residues; it reads QPPSNTIPSQAQ. Over residues 852-861 the composition is skewed to low complexity; sequence QQPSFSYPQQ.

In terms of processing, phosphorylated on tyrosine residues.

It is found in the cytoplasm. Its subcellular location is the cytosol. The protein localises to the melanosome. The protein resides in the cytoskeleton. It localises to the microtubule organizing center. It is found in the centrosome. Its subcellular location is the secreted. The protein localises to the extracellular exosome. The protein resides in the cell junction. It localises to the tight junction. It is found in the midbody. Its subcellular location is the midbody ring. Its function is as follows. Multifunctional protein that may be involved in endocytosis, multivesicular body biogenesis, membrane repair, cytokinesis, apoptosis and maintenance of tight junction integrity. Class E VPS protein involved in concentration and sorting of cargo proteins of the multivesicular body (MVB) for incorporation into intralumenal vesicles that are generated by invagination and scission from the limiting membrane of the endosome. Binds to the phospholipid lysobisphosphatidic acid (LBPA) which is abundant in MVBs internal membranes. May play a role in the regulation of both apoptosis and cell proliferation. Regulates exosome biogenesis in concert with SDC1/4 and SDCBP. Ensures the proper assembly and positioning of actomyosin-tight junction complex at the apical sides of adjacent epithelial cells that defines a spatial membrane domain essential for the maintenance of epithelial cell polarity and barrier. This Xenopus laevis (African clawed frog) protein is Programmed cell death 6-interacting protein (pdcd6ip).